We begin with the raw amino-acid sequence, 293 residues long: ATP synthase subunit gamma, mitochondrial (293 aa).

The transit peptide at 1–21 (MFALRTAARPAARSVGATRNY) directs the protein to the mitochondrion.

In terms of assembly, F-type ATP synthases have 2 components, the catalytic core F(1) and the membrane-embedded component F(0), linked together by a central stalk and a peripheral stalk. The central stalk, also called rotor shaft, is often seen as part of F(1). The peripheral stalk is seen as part of F(0). F(0) contains the membrane channel next to the rotor. F-type ATP synthases form dimers but each monomer functions independently in ATP generation. The dimer consists of 17 different polypeptides: ATP1 (subunit alpha, 3 molecules per monomer, part of F(1)), ATP2 (subunit beta, 3 copies per monomer, part of F(1)), ATP3 (subunit gamma, part of the central stalk), ATP4 (subunit b, part of the peripheral stalk), ATP5/OSCP (subunit 5/OSCP, part of the peripheral stalk), ATP6 (subunit a, part of the peripheral stalk), ATP7 (subunit d, part of the peripheral stalk), ATP8 (subunit 8, part of the peripheral stalk), OLI1 (subunit c, part of the rotor, 10 molecules per monomer), ATP14 (subunit h, part of the peripheral stalk), ATP15 (subunit epsilon, part of the central stalk), ATP16 (subunit delta, part of the central stalk), ATP17 (subunit f, part of the peripheral stalk), ATP18 (subunit i/j, part of the peripheral stalk), ATP19 (subunit k, dimer-specific, at interface between monomers), ATP20 (subunit g, at interface between monomers), TIM11 (subunit e, at interface between monomers).

The protein localises to the mitochondrion inner membrane. In terms of biological role, mitochondrial membrane ATP synthase (F(1)F(0) ATP synthase or Complex V) produces ATP from ADP in the presence of a proton gradient across the membrane which is generated by electron transport complexes of the respiratory chain. F-type ATP synthases consist of two structural domains, F(1) - containing the extramembraneous catalytic core, and F(0) - containing the membrane proton channel, linked together by a central stalk and a peripheral stalk. During catalysis, ATP synthesis in the catalytic domain of F(1) is coupled via a rotary mechanism of the central stalk subunits to proton translocation. Part of the complex F(1) domain and the central stalk which is part of the complex rotary element. The gamma/ATP3 subunit protrudes into the catalytic domain formed of alpha/ATP1(3)beta/ATP2(3). Rotation of the central stalk against the surrounding alpha/ATP1(3)beta/ATP2(3) subunits leads to hydrolysis of ATP in three separate catalytic sites on the beta/ATP2 subunits. The sequence is that of ATP synthase subunit gamma, mitochondrial from Yarrowia lipolytica (strain CLIB 122 / E 150) (Yeast).